The following is a 134-amino-acid chain: Phosphoribosyl-ATP pyrophosphatase 2 (134 aa).

This sequence belongs to the PRA-PH family.

The protein localises to the cytoplasm. The enzyme catalyses 1-(5-phospho-beta-D-ribosyl)-ATP + H2O = 1-(5-phospho-beta-D-ribosyl)-5'-AMP + diphosphate + H(+). Its pathway is amino-acid biosynthesis; L-histidine biosynthesis; L-histidine from 5-phospho-alpha-D-ribose 1-diphosphate: step 2/9. In Bradyrhizobium diazoefficiens (strain JCM 10833 / BCRC 13528 / IAM 13628 / NBRC 14792 / USDA 110), this protein is Phosphoribosyl-ATP pyrophosphatase 2 (hisE2).